The following is a 589-amino-acid chain: Delta-like protein 3 (589 aa).

A signal peptide spans 1–32 (MVSLQVSSLPQTLILAFLLPQALPAGVFELQI). The Extracellular segment spans residues 33–494 (HSFGPGPGPG…LRQADSQRFL (462 aa)). The DSL domain maps to 174–213 (ARCEPPAVGAACARLCRSRSAPSRCGPGLRPCTPFPDECE). EGF-like domains follow at residues 218-251 (SLTV…PLCT), 276-312 (GPGP…PRCE), 314-353 (SGVT…SNCE), 355-391 (RVDR…PRCE), 393-429 (DLDD…RDCR), and 431-467 (RADP…VRCE). 18 disulfide bridges follow: C222–C233, C226–C239, C241–C250, C280–C291, C285–C300, C302–C311, C318–C329, C323–C341, C343–C352, C359–C370, C364–C379, C381–C390, C397–C408, C402–C417, C419–C428, C435–C446, C440–C455, and C457–C466. A helical membrane pass occupies residues 495–515 (LPPALGLLAAAALAGAALLLI). The Cytoplasmic segment spans residues 516 to 589 (HVRRRGPGRD…PAPSIYAREA (74 aa)). The disordered stretch occupies residues 552–574 (QDGAGDGPTSSADWNHPEDGDSR).

As to quaternary structure, can bind and activate Notch-1 or another Notch receptor. In terms of processing, ubiquitinated by MIB (MIB1 or MIB2), leading to its endocytosis and subsequent degradation.

It localises to the membrane. Its function is as follows. Inhibits primary neurogenesis. May be required to divert neurons along a specific differentiation pathway. Plays a role in the formation of somite boundaries during segmentation of the paraxial mesoderm. This is Delta-like protein 3 (Dll3) from Rattus norvegicus (Rat).